Consider the following 543-residue polypeptide: Plant intracellular Ras-group-related LRR protein 5 (543 aa).

10 LRR repeats span residues 239–262 (LQDVTELDLSENRIMALPSTIGSL), 264–284 (YLTKLDLHSNQLINLPDAFGE), 285–307 (LSNLIDLDLHANQLKSLPSSFGN), 309–331 (TSLANLDLSSNMLKALPDCLGKL), 332–354 (ANLRRLIVETNELEELPYTIGSC), 356–377 (SLVELRLDFNQLKALPEAIGKL), 378–400 (EKLEILTLHYNRIKGLPTTVGSL), 402–424 (RLRELDVSFNEVEVIPENICFAT), 426–448 (LVKLNLSRNFADLRALPKSIGNL), and 449–470 (EMLEELDISSNQIRVLPDSFRC). Residues 472–494 (SRLRVFHADETPLEFPPREVVKL) form an LRR 11; degenerate repeat. The short motif at 495–502 (GAQAVVKY) is the GVYW; degenerate element.

This sequence belongs to the SHOC2 family. As to expression, widely expressed.

Functionally, leucine-rich repeat protein that likely mediates protein interactions, possibly in the context of signal transduction. The protein is Plant intracellular Ras-group-related LRR protein 5 (IRL5) of Oryza sativa subsp. japonica (Rice).